A 197-amino-acid chain; its full sequence is MSTTIDMPGSSKAAKAGKPVLVTTPSRPGGWKKGVAIMDFILRLGAIAAALGAAATMGLSDQTLPFFTQFFQFEASYDSFTTFQFFVITMALVAGYLVLSLPLSIVAVVRPHAAGPRLFLIILDTVFLTLATASGASAASIVYLAHNGNQDTNWIAICNQFGDFCAQTSGAVVSSLVAVLVFVLLIVMSALVLGKKH.

The Cytoplasmic segment spans residues 1–34 (MSTTIDMPGSSKAAKAGKPVLVTTPSRPGGWKKG). A helical membrane pass occupies residues 35-55 (VAIMDFILRLGAIAAALGAAA). At 56-84 (TMGLSDQTLPFFTQFFQFEASYDSFTTFQ) the chain is on the extracellular side. A helical transmembrane segment spans residues 85–105 (FFVITMALVAGYLVLSLPLSI). The Cytoplasmic segment spans residues 106-117 (VAVVRPHAAGPR). The chain crosses the membrane as a helical span at residues 118 to 138 (LFLIILDTVFLTLATASGASA). Over 139–171 (ASIVYLAHNGNQDTNWIAICNQFGDFCAQTSGA) the chain is Extracellular. The chain crosses the membrane as a helical span at residues 172 to 192 (VVSSLVAVLVFVLLIVMSALV). The Cytoplasmic segment spans residues 193-197 (LGKKH).

It belongs to the Casparian strip membrane proteins (CASP) family. As to quaternary structure, homodimer and heterodimers.

Its subcellular location is the cell membrane. Its function is as follows. Regulates membrane-cell wall junctions and localized cell wall deposition. Required for establishment of the Casparian strip membrane domain (CSD) and the subsequent formation of Casparian strips, a cell wall modification of the root endodermis that determines an apoplastic barrier between the intraorganismal apoplasm and the extraorganismal apoplasm and prevents lateral diffusion. The protein is Casparian strip membrane protein 5 of Lotus japonicus (Lotus corniculatus var. japonicus).